The primary structure comprises 236 residues: Small ribosomal subunit protein uS2c (236 aa).

Belongs to the universal ribosomal protein uS2 family.

The protein resides in the plastid. The protein localises to the chloroplast. The protein is Small ribosomal subunit protein uS2c (rps2) of Coffea arabica (Arabian coffee).